Reading from the N-terminus, the 266-residue chain is Glutamate racemase 1 (266 aa).

Residues 11 to 12 and 43 to 44 each bind substrate; these read DS and YG. Residue C74 is the Proton donor/acceptor of the active site. 75–76 contacts substrate; sequence NT. The active-site Proton donor/acceptor is C182. A substrate-binding site is contributed by 183–184; it reads TH.

Belongs to the aspartate/glutamate racemases family.

The enzyme catalyses L-glutamate = D-glutamate. It participates in cell wall biogenesis; peptidoglycan biosynthesis. Provides the (R)-glutamate required for cell wall biosynthesis. The chain is Glutamate racemase 1 from Caldanaerobacter subterraneus subsp. tengcongensis (strain DSM 15242 / JCM 11007 / NBRC 100824 / MB4) (Thermoanaerobacter tengcongensis).